The following is a 120-amino-acid chain: NAD(P)H-quinone oxidoreductase subunit 3, chloroplastic (120 aa).

Transmembrane regions (helical) follow at residues 9–29 (IFWA…LISG), 64–84 (MFAL…PWAM), and 88–108 (VLGV…IVGS).

It belongs to the complex I subunit 3 family. As to quaternary structure, NDH is composed of at least 16 different subunits, 5 of which are encoded in the nucleus.

The protein localises to the plastid. It localises to the chloroplast thylakoid membrane. The catalysed reaction is a plastoquinone + NADH + (n+1) H(+)(in) = a plastoquinol + NAD(+) + n H(+)(out). It carries out the reaction a plastoquinone + NADPH + (n+1) H(+)(in) = a plastoquinol + NADP(+) + n H(+)(out). In terms of biological role, NDH shuttles electrons from NAD(P)H:plastoquinone, via FMN and iron-sulfur (Fe-S) centers, to quinones in the photosynthetic chain and possibly in a chloroplast respiratory chain. The immediate electron acceptor for the enzyme in this species is believed to be plastoquinone. Couples the redox reaction to proton translocation, and thus conserves the redox energy in a proton gradient. This chain is NAD(P)H-quinone oxidoreductase subunit 3, chloroplastic, found in Gossypium barbadense (Sea Island cotton).